The sequence spans 420 residues: Histidine--tRNA ligase (420 aa).

This sequence belongs to the class-II aminoacyl-tRNA synthetase family. Homodimer.

It is found in the cytoplasm. The enzyme catalyses tRNA(His) + L-histidine + ATP = L-histidyl-tRNA(His) + AMP + diphosphate + H(+). The chain is Histidine--tRNA ligase from Streptomyces avermitilis (strain ATCC 31267 / DSM 46492 / JCM 5070 / NBRC 14893 / NCIMB 12804 / NRRL 8165 / MA-4680).